The sequence spans 227 residues: Cytochrome c oxidase subunit 2 (227 aa).

At 1 to 14 (MAYPFQLGLQDATS) the chain is on the mitochondrial intermembrane side. A helical membrane pass occupies residues 15–45 (PIMEELTNFHDHTLMIVFLISTLVLYIISLM). The Mitochondrial matrix segment spans residues 46–59 (LTTKLTHTSTMDAQ). Residues 60–87 (EVETIWTILPAVILILIALPSLRILYMM) form a helical membrane-spanning segment. The Mitochondrial intermembrane segment spans residues 88-227 (DEINNPVLTV…YFENWSASMI (140 aa)). The Cu cation site is built by His-161, Cys-196, Glu-198, Cys-200, His-204, and Met-207. Glu-198 is a Mg(2+) binding site. Tyr-218 is modified (phosphotyrosine).

It belongs to the cytochrome c oxidase subunit 2 family. As to quaternary structure, component of the cytochrome c oxidase (complex IV, CIV), a multisubunit enzyme composed of 14 subunits. The complex is composed of a catalytic core of 3 subunits MT-CO1, MT-CO2 and MT-CO3, encoded in the mitochondrial DNA, and 11 supernumerary subunits COX4I, COX5A, COX5B, COX6A, COX6B, COX6C, COX7A, COX7B, COX7C, COX8 and NDUFA4, which are encoded in the nuclear genome. The complex exists as a monomer or a dimer and forms supercomplexes (SCs) in the inner mitochondrial membrane with NADH-ubiquinone oxidoreductase (complex I, CI) and ubiquinol-cytochrome c oxidoreductase (cytochrome b-c1 complex, complex III, CIII), resulting in different assemblies (supercomplex SCI(1)III(2)IV(1) and megacomplex MCI(2)III(2)IV(2)). Found in a complex with TMEM177, COA6, COX18, COX20, SCO1 and SCO2. Interacts with TMEM177 in a COX20-dependent manner. Interacts with COX20. Interacts with COX16. Requires Cu cation as cofactor.

The protein resides in the mitochondrion inner membrane. It catalyses the reaction 4 Fe(II)-[cytochrome c] + O2 + 8 H(+)(in) = 4 Fe(III)-[cytochrome c] + 2 H2O + 4 H(+)(out). Its function is as follows. Component of the cytochrome c oxidase, the last enzyme in the mitochondrial electron transport chain which drives oxidative phosphorylation. The respiratory chain contains 3 multisubunit complexes succinate dehydrogenase (complex II, CII), ubiquinol-cytochrome c oxidoreductase (cytochrome b-c1 complex, complex III, CIII) and cytochrome c oxidase (complex IV, CIV), that cooperate to transfer electrons derived from NADH and succinate to molecular oxygen, creating an electrochemical gradient over the inner membrane that drives transmembrane transport and the ATP synthase. Cytochrome c oxidase is the component of the respiratory chain that catalyzes the reduction of oxygen to water. Electrons originating from reduced cytochrome c in the intermembrane space (IMS) are transferred via the dinuclear copper A center (CU(A)) of subunit 2 and heme A of subunit 1 to the active site in subunit 1, a binuclear center (BNC) formed by heme A3 and copper B (CU(B)). The BNC reduces molecular oxygen to 2 water molecules using 4 electrons from cytochrome c in the IMS and 4 protons from the mitochondrial matrix. This is Cytochrome c oxidase subunit 2 (MT-CO2) from Leopoldamys sabanus (Long-tailed giant rat).